The primary structure comprises 310 residues: Methionyl-tRNA formyltransferase (310 aa).

Serine 110–proline 113 contributes to the (6S)-5,6,7,8-tetrahydrofolate binding site.

This sequence belongs to the Fmt family.

The catalysed reaction is L-methionyl-tRNA(fMet) + (6R)-10-formyltetrahydrofolate = N-formyl-L-methionyl-tRNA(fMet) + (6S)-5,6,7,8-tetrahydrofolate + H(+). Functionally, attaches a formyl group to the free amino group of methionyl-tRNA(fMet). The formyl group appears to play a dual role in the initiator identity of N-formylmethionyl-tRNA by promoting its recognition by IF2 and preventing the misappropriation of this tRNA by the elongation apparatus. The sequence is that of Methionyl-tRNA formyltransferase from Mycolicibacterium vanbaalenii (strain DSM 7251 / JCM 13017 / BCRC 16820 / KCTC 9966 / NRRL B-24157 / PYR-1) (Mycobacterium vanbaalenii).